The sequence spans 100 residues: Urease subunit gamma (100 aa).

This sequence belongs to the urease gamma subunit family. As to quaternary structure, heterotrimer of UreA (gamma), UreB (beta) and UreC (alpha) subunits. Three heterotrimers associate to form the active enzyme.

The protein localises to the cytoplasm. The catalysed reaction is urea + 2 H2O + H(+) = hydrogencarbonate + 2 NH4(+). The protein operates within nitrogen metabolism; urea degradation; CO(2) and NH(3) from urea (urease route): step 1/1. The chain is Urease subunit gamma from Prochlorococcus marinus (strain NATL1A).